We begin with the raw amino-acid sequence, 321 residues long: ATP-dependent 6-phosphofructokinase (321 aa).

Gly12 is a binding site for ATP. ADP contacts are provided by residues 22-26 and 55-60; these read RGVVR and RYSVSD. ATP contacts are provided by residues 73–74 and 103–106; these read RF and GDGS. Position 104 (Asp104) interacts with Mg(2+). Substrate is bound at residue 127 to 129; that stretch reads TID. The Proton acceptor role is filled by Asp129. Position 156 (Arg156) interacts with ADP. Substrate is bound by residues Arg164 and 171-173; that span reads MGR. ADP contacts are provided by residues 187 to 189, Arg213, and 215 to 217; these read GCE and KRH. Substrate is bound by residues Glu224, Arg245, and 251–254; that span reads HIQR.

This sequence belongs to the phosphofructokinase type A (PFKA) family. ATP-dependent PFK group I subfamily. Prokaryotic clade 'B1' sub-subfamily. As to quaternary structure, homotetramer. It depends on Mg(2+) as a cofactor.

The protein localises to the cytoplasm. The enzyme catalyses beta-D-fructose 6-phosphate + ATP = beta-D-fructose 1,6-bisphosphate + ADP + H(+). The protein operates within carbohydrate degradation; glycolysis; D-glyceraldehyde 3-phosphate and glycerone phosphate from D-glucose: step 3/4. Allosterically activated by ADP and other diphosphonucleosides, and allosterically inhibited by phosphoenolpyruvate. Functionally, catalyzes the phosphorylation of D-fructose 6-phosphate to fructose 1,6-bisphosphate by ATP, the first committing step of glycolysis. The chain is ATP-dependent 6-phosphofructokinase from Haemophilus influenzae (strain PittEE).